The primary structure comprises 499 residues: Probable alginate O-acetylase AlgI (499 aa).

A run of 11 helical transmembrane segments spans residues Val-7–Ala-25, Tyr-40–Gly-62, Trp-78–Val-100, Phe-115–Ile-137, Asn-150–Phe-172, Leu-239–Phe-261, Ile-312–Trp-334, Ile-354–Phe-373, Val-380–Ser-397, Leu-407–Ala-429, and Val-475–Phe-497. The active site involves His-322.

It belongs to the membrane-bound acyltransferase family.

Its subcellular location is the cell inner membrane. It functions in the pathway glycan biosynthesis; alginate biosynthesis. Together with AlgJ and AlgF, forms an inner membrane complex which probably interacts with the alginate polymerization-transport complex and adds acetyl groups at the O-2 and O-3 positions of mannuronate residues. Acetylation of alginate increases cyst resistance to desiccation. The sequence is that of Probable alginate O-acetylase AlgI (algI) from Azotobacter vinelandii.